The chain runs to 122 residues: Flagellar protein FliT (122 aa).

Positions 1–50 (MERQQQLLAAYQQIHSLSSQMIALAQTERWEDLVELELAYVTAVESTAAF) are required for homodimerization. Residues 60–98 (LQELLRNKLQQILDNETELKRLLQQRMDQLKELIGQSTR) form a fliD binding region.

The protein belongs to the FliT family. Homodimer. Interacts with FliD and FlhC.

It is found in the cytoplasm. It localises to the cytosol. Functionally, dual-function protein that regulates the transcription of class 2 flagellar operons and that also acts as an export chaperone for the filament-capping protein FliD. As a transcriptional regulator, acts as an anti-FlhDC factor; it directly binds FlhC, thus inhibiting the binding of the FlhC/FlhD complex to class 2 promoters, resulting in decreased expression of class 2 flagellar operons. As a chaperone, effects FliD transition to the membrane by preventing its premature polymerization, and by directing it to the export apparatus. In Serratia proteamaculans (strain 568), this protein is Flagellar protein FliT.